We begin with the raw amino-acid sequence, 811 residues long: Glycerol-3-phosphate acyltransferase (811 aa).

The short motif at 308 to 313 (CHRSHM) is the HXXXXD motif element.

Belongs to the GPAT/DAPAT family.

Its subcellular location is the cell inner membrane. It carries out the reaction sn-glycerol 3-phosphate + an acyl-CoA = a 1-acyl-sn-glycero-3-phosphate + CoA. It functions in the pathway phospholipid metabolism; CDP-diacylglycerol biosynthesis; CDP-diacylglycerol from sn-glycerol 3-phosphate: step 1/3. In Pseudoalteromonas atlantica (strain T6c / ATCC BAA-1087), this protein is Glycerol-3-phosphate acyltransferase.